A 380-amino-acid chain; its full sequence is Cytochrome b (380 aa).

A run of 4 helical transmembrane segments spans residues 34–54 (FGSL…LLAM), 78–99 (WLIR…YLHI), 114–134 (WNIG…GYVL), and 179–199 (LFAL…VHLT). Residues histidine 84 and histidine 98 each coordinate heme b. 2 residues coordinate heme b: histidine 183 and histidine 197. Position 202 (histidine 202) interacts with a ubiquinone. 4 helical membrane passes run 227-247 (IKDL…ALFA), 289-309 (LGGV…PLLH), 321-341 (LSQM…WVGS), and 348-368 (FIII…VLFP).

It belongs to the cytochrome b family. As to quaternary structure, the cytochrome bc1 complex contains 11 subunits: 3 respiratory subunits (MT-CYB, CYC1 and UQCRFS1), 2 core proteins (UQCRC1 and UQCRC2) and 6 low-molecular weight proteins (UQCRH/QCR6, UQCRB/QCR7, UQCRQ/QCR8, UQCR10/QCR9, UQCR11/QCR10 and a cleavage product of UQCRFS1). This cytochrome bc1 complex then forms a dimer. Heme b serves as cofactor.

It is found in the mitochondrion inner membrane. Its function is as follows. Component of the ubiquinol-cytochrome c reductase complex (complex III or cytochrome b-c1 complex) that is part of the mitochondrial respiratory chain. The b-c1 complex mediates electron transfer from ubiquinol to cytochrome c. Contributes to the generation of a proton gradient across the mitochondrial membrane that is then used for ATP synthesis. This Aphelocoma coerulescens (Florida scrub-jay) protein is Cytochrome b (MT-CYB).